Reading from the N-terminus, the 176-residue chain is MSRVGKSPIALQGAEVKLADGAITVKGPLGTITQAINPLVNVANNDGTLNLAPVDESREANALSGTMRAIIANAVHGVTKGFERKLTLVGVGYRAQAQGDKLNLSLGFSHPVVHQMPEGVKAETPTQTEIVIKGINKQQVGQVAAEVRGYRPPEPYKGKGVRYSDEVVILKETKKK.

Belongs to the universal ribosomal protein uL6 family. Part of the 50S ribosomal subunit.

This protein binds to the 23S rRNA, and is important in its secondary structure. It is located near the subunit interface in the base of the L7/L12 stalk, and near the tRNA binding site of the peptidyltransferase center. This chain is Large ribosomal subunit protein uL6, found in Burkholderia lata (strain ATCC 17760 / DSM 23089 / LMG 22485 / NCIMB 9086 / R18194 / 383).